Consider the following 31-residue polypeptide: QRQCERLRDCYKYCMSPKRCTYGTCYCEPSP.

Position 1 is a pyrrolidone carboxylic acid (glutamine 1). Intrachain disulfides connect cysteine 4-cysteine 20, cysteine 10-cysteine 25, and cysteine 14-cysteine 27. Position 31 is a proline amide (proline 31).

The protein belongs to the short scorpion toxin superfamily. Potassium channel inhibitor family. Alpha-KTx 17 subfamily. Post-translationally, the N-terminus is blocked. As to expression, expressed by the venom gland.

The protein localises to the secreted. Blocker of potassium channels (Kv). The chain is Toxin BmKK16 from Olivierus martensii (Manchurian scorpion).